We begin with the raw amino-acid sequence, 1689 residues long: MNIAQPVSSEIKSVKFGIYDVDDVEKISVKQIVNPVLLDNLNHPTNGGLYDLALGPYLKNSVCATCHLDERYCPGHFGHIVLPIPAYHPLFFSQMYNLLRSTCLYCHHFKLSKVKVHLFFCRLKLLDYGLLNESEMVENVSLTEAIIKNSNGTPLEDGSDSEDSGLGHDDIAKDAATLMRIRDEFVAKSIADSRQNAHIDAQLTTLLLHERKKVVRAFYHAISSRKQCDNCQSFSPNFRKEGFAKIFEIPLSGKNLQFMEQTGKIRSDVLRDTSKKHHEDEGYDGDSDSSNESEVEGIDLFEEDPNPLKNKSKSPIAHGAKYMTSTEVRNHLRRLFVKENVVLSRLYAHKRGKPASADMFFLQNIAVPPTRFRPASKMGDEVHENIQNELLTRILQSSIQIASLSKDSTVEVNPDEKEGLERRSRAFELLINAFVQLQHDVNSLIDSNRNPSSGGQSRTVPPGIKQILEKKEGLFRKHMMGKRVNYAARSVISPDPNIETNEIGVPPVFATKLTYPEPVTLYNFNEMRNAVINGPHKWPGASHIQNEDGTLISLMPLTIEQRTALANQLLTPQSNLISSPYSYSRLINTNKKVYRHVRNGDMLILNRQPTLHKPSMMAHKARILPGEKTIRMHYANCNSYNADFDGDEMNMHFPQSTNARSEAQFIANTDSQYLVPTSGDPLRGLIQDHVVMGVWLTCKDTFYTRDEYQQLLFQALKPDETGMYGRIKTLPPAIQRPGIYWTGKQIISSVLLNLKPSDRPGLNLKSKAKVPGKYWSPDSEEGSVLFDDGELLCGILDKSSFGASAFGLVHSVHELYGPDIAGRLLSVLSRLFTAYAQMRGFTCRMDDLRLDEQGDNWRRQLLENGKSFGLEAASEYVGLSTDSPIALLNANLEEVYRDDEKLQGLDAAMKGKMNGLTSSIINKCIPDGLLTKFPYNHMQTMTVSGAKGSNVNVSQISCLLGQQELEGRRVPLMVSGKSLPSFVPYETSAKSGGFIASRFLTGIAPQEYYFHCMAGREGLIDTAVKTSRSGYLQRCLMKHLEGLCVQYDHTVRDSDGSIVQFHYGEDSLDVTKQKHLTQFEFSAKNYKSLIQKYKVKSVLSAVDSETASSYAKKALKKPYKYDPVLDKYPPSRYLGSVSEKFQRAVDEYTQKNPDKLIASKKESKLDDSLLNESKFKALMQLRYQQSLVDPGESVGVLASQSIGEPSTQMTLNTFHFAGFGAKNVTLGIPRLREIIMTASANIQTPTMTLRLNDGVSDKRASAFCKEVNKLVLSEVVRQVRVTEKISGQGSDEQSKTYAIRLDLYSRDEYQDEYGVLQEEIESTFSNRFLKILNRIIKSYLAKSKQRKSGGKDDTVPEVGQALKPLEDIDEAPIEGRAQEALEDEDNDATNEKMVSRSKQHASYEGPDEADKVALRQLKGSNKVEDVNMDEEEDEGFKSDESVSDFKERKLLEKQNTVSISERRELQLKTAKEILSNCKHLDFDYVNGEWATVELVFPINTEKLLMVSLVEKACSETVIHEIPGITRCFSKPPDSALDTVPKVITEGVNLKAIWEFYNEISMNDIYTNDIAAILRIYGVEAARNAIVHEVSSVFGVYGIAVDPRHLSLIADYMTFEGGYKAFNRMGIEYNTSPFAKMSFETTCHFLTEAALRGDVDDLSNPSSRLVVGRVGNFGTGSFDIFTPVVDSPAN.

Positions 63, 66, 73, and 76 each coordinate Zn(2+). A phosphoserine mark is found at Ser159 and Ser161. Basic and acidic residues predominate over residues 269–280; sequence VLRDTSKKHHED. The segment at 269 to 295 is disordered; sequence VLRDTSKKHHEDEGYDGDSDSSNESEV. The segment covering 281–295 has biased composition (acidic residues); that stretch reads EGYDGDSDSSNESEV. Residues Asp643, Asp645, and Asp647 each coordinate Mg(2+). The segment at 1005 to 1017 is bridging helix; the sequence is PQEYYFHCMAGRE. The tract at residues 1346-1440 is disordered; the sequence is RKSGGKDDTV…EEDEGFKSDE (95 aa). Phosphoserine is present on residues Ser1438 and Ser1441.

Belongs to the RNA polymerase beta' chain family. Component of the RNA polymerase I (Pol I) complex consisting of at least 13 subunits.

Its subcellular location is the nucleus. It localises to the nucleolus. It catalyses the reaction RNA(n) + a ribonucleoside 5'-triphosphate = RNA(n+1) + diphosphate. DNA-dependent RNA polymerase catalyzes the transcription of DNA into RNA using the four ribonucleoside triphosphates as substrates. Largest and catalytic core component of RNA polymerase I which synthesizes ribosomal RNA precursors. Forms the polymerase active center together with the second largest subunit. A single stranded DNA template strand of the promoter is positioned within the central active site cleft of Pol I. A bridging helix emanates from RPA1 and crosses the cleft near the catalytic site and is thought to promote translocation of Pol I by acting as a ratchet that moves the RNA-DNA hybrid through the active site by switching from straight to bent conformations at each step of nucleotide addition. The sequence is that of DNA-directed RNA polymerase I subunit rpa1 (rpa1) from Schizosaccharomyces pombe (strain 972 / ATCC 24843) (Fission yeast).